Consider the following 235-residue polypeptide: Exosome complex component RRP46 (235 aa).

Residues 1 to 13 (MEEETHTDAKIRA) show a composition bias toward basic and acidic residues. A disordered region spans residues 1-24 (MEEETHTDAKIRAENGTGSSPRGP). The residue at position 20 (S20) is a Phosphoserine.

This sequence belongs to the RNase PH family. As to quaternary structure, homodimer. Component of the RNA exosome core complex (Exo-9), composed of EXOSC1, EXOSC2, EXOSC3, EXOSC4, EXOSC5, EXOSC6, EXOSC7, EXOSC8 and EXOSC9; within the complex interacts with EXOSC3, EXOSC8, and EXOSC9. The catalytically inactive RNA exosome core complex (Exo-9) associates with the catalytic subunit EXOSC10/RRP6. Exo-9 may associate with DIS3 to form the nucleolar exosome complex, or DIS3L to form the cytoplasmic exosome complex. Exo-9 is formed by a hexameric base ring consisting of the heterodimers EXOSC4-EXOSC9, EXOSC5-EXOSC8 and EXOSC6-EXOSC7, and a cap ring consisting of EXOSC1, EXOSC2 and EXOSC3. The RNA exosome complex associates with cofactors C1D/RRP47, MPHOSPH6/MPP6 and MTREX/MTR4. Interacts with GTPBP1. Interacts with ZC3HAV1. Interacts with DDX17 only in the presence of ZC3HAV1 in an RNA-independent manner. Highly expressed in a variety of hematopoietic and epithelial tumor cell lines, but not in normal hematopoietic tissues or other normal tissue, with the exception of testis.

The protein resides in the nucleus. The protein localises to the nucleolus. It is found in the cytoplasm. Functionally, non-catalytic component of the RNA exosome complex which has 3'-&gt;5' exoribonuclease activity and participates in a multitude of cellular RNA processing and degradation events. In the nucleus, the RNA exosome complex is involved in proper maturation of stable RNA species such as rRNA, snRNA and snoRNA, in the elimination of RNA processing by-products and non-coding 'pervasive' transcripts, such as antisense RNA species and promoter-upstream transcripts (PROMPTs), and of mRNAs with processing defects, thereby limiting or excluding their export to the cytoplasm. The RNA exosome may be involved in Ig class switch recombination (CSR) and/or Ig variable region somatic hypermutation (SHM) by targeting AICDA deamination activity to transcribed dsDNA substrates. In the cytoplasm, the RNA exosome complex is involved in general mRNA turnover and specifically degrades inherently unstable mRNAs containing AU-rich elements (AREs) within their 3' untranslated regions, and in RNA surveillance pathways, preventing translation of aberrant mRNAs. It seems to be involved in degradation of histone mRNA. The catalytic inactive RNA exosome core complex of 9 subunits (Exo-9) is proposed to play a pivotal role in the binding and presentation of RNA for ribonucleolysis, and to serve as a scaffold for the association with catalytic subunits and accessory proteins or complexes. In vitro, EXOSC5 does not bind or digest single-stranded RNA and binds to double-stranded DNA without detectable DNase activity. The polypeptide is Exosome complex component RRP46 (EXOSC5) (Homo sapiens (Human)).